Consider the following 92-residue polypeptide: MEIRILKSESNYLELEIEGEDHTLGNLIAGTLRRISGVSFASYYQPHPLSDKIIVKILTDGSITPKDALLKAIENIRGMTSHYIDEIKGLTK.

It belongs to the archaeal Rpo11/eukaryotic RPB11/RPC19 RNA polymerase subunit family. As to quaternary structure, part of the 13-subunit RNA polymerase complex.

It localises to the cytoplasm. It carries out the reaction RNA(n) + a ribonucleoside 5'-triphosphate = RNA(n+1) + diphosphate. Functionally, DNA-dependent RNA polymerase (RNAP) catalyzes the transcription of DNA into RNA using the four ribonucleoside triphosphates as substrates. This is DNA-directed RNA polymerase subunit Rpo11 from Saccharolobus solfataricus (strain ATCC 35092 / DSM 1617 / JCM 11322 / P2) (Sulfolobus solfataricus).